We begin with the raw amino-acid sequence, 352 residues long: MSTEDIYFNPIWDVRMTDTSLRDGSHHKRHQFTKDEVGSIVAALDAAGVPVIEVTHGDGLGGSSFNYGFSKTPEQELIKLAAETAKESKIAFLMLPGVGTKEDIKEAQNNGGSICRIATHCTEADVSIQHFGLARELGLETVGFLMMSHTISPEKLAKQARIMADAGCQCVYVVDSAGALVLEGVADRVSALVAELGDDAQVGFHGHENLGLGVANSIEAVRAGAKQIDGSCRRFGAGAGNAPVEALIGVFDKIGVKTGIDFFDIADAAEEVVAPAMPAECLLDRNALIMGYSGVYSSFLKHAIRQSERYGVPAHQLLHRAGQRKLIGGQEDQLIDIALEIKREQEAEATRA.

In terms of domain architecture, Pyruvate carboxyltransferase spans 14 to 266 (VRMTDTSLRD…KTGIDFFDIA (253 aa)). 22–23 (RD) is a substrate binding site. Aspartate 23 lines the Mn(2+) pocket. The active-site Proton acceptor is the histidine 26. Positions 176 and 205 each coordinate substrate. The Mn(2+) site is built by histidine 205 and histidine 207. Substrate is bound at residue tyrosine 296.

Belongs to the 4-hydroxy-2-oxovalerate aldolase family.

The enzyme catalyses (S)-4-hydroxy-2-oxopentanoate = acetaldehyde + pyruvate. This chain is 4-hydroxy-2-oxovalerate aldolase, found in Mycolicibacterium gilvum (strain PYR-GCK) (Mycobacterium gilvum (strain PYR-GCK)).